The sequence spans 560 residues: Glucose-6-phosphate isomerase, cytosolic (560 aa).

Residue Ala-2 is modified to N-acetylalanine. Glu-361 acts as the Proton donor in catalysis. Catalysis depends on residues His-392 and Lys-517.

Belongs to the GPI family. Homodimer.

The protein localises to the cytoplasm. It carries out the reaction alpha-D-glucose 6-phosphate = beta-D-fructose 6-phosphate. Its pathway is carbohydrate degradation; glycolysis; D-glyceraldehyde 3-phosphate and glycerone phosphate from D-glucose: step 2/4. Its activity is regulated as follows. Inhibited by glycerol-3-P (G3P). This Arabidopsis thaliana (Mouse-ear cress) protein is Glucose-6-phosphate isomerase, cytosolic (PGIC).